An 833-amino-acid polypeptide reads, in one-letter code: Leucine--tRNA ligase (833 aa).

A 'HIGH' region motif is present at residues 41-52 (PYPSGAGLHVGH). The 'KMSKS' region motif lies at 610–614 (KMSKS). Lys613 lines the ATP pocket.

The protein belongs to the class-I aminoacyl-tRNA synthetase family.

It localises to the cytoplasm. It carries out the reaction tRNA(Leu) + L-leucine + ATP = L-leucyl-tRNA(Leu) + AMP + diphosphate. This chain is Leucine--tRNA ligase, found in Streptococcus suis (strain 05ZYH33).